Consider the following 1093-residue polypeptide: Probable phosphorylase b kinase regulatory subunit beta (1093 aa).

Residues 1 to 27 form a disordered region; it reads MRDVPKSLGLSVTTPGGSSGAPDSGRH. Calmodulin-binding regions lie at residues 6–27, 751–778, and 905–936; these read KSLGLSVTTPGGSSGAPDSGRH, QLYHRAGSLRYWRAVRYCSSLLHHIVDS, and EKLTTLQRRQLEGCLCRVPKHFYNKIWEILQR. A lipid anchor (S-farnesyl cysteine) is attached at Cys-1090.

The protein belongs to the phosphorylase b kinase regulatory chain family. In terms of processing, although the final Cys may be farnesylated, the terminal tripeptide is probably not removed, and the C-terminus is not methylated.

It localises to the cell membrane. The protein operates within glycan biosynthesis; glycogen metabolism. Functionally, phosphorylase b kinase catalyzes the phosphorylation of serine in certain substrates, including troponin I. The beta chain acts as a regulatory unit and modulates the activity of the holoenzyme in response to phosphorylation. This Drosophila melanogaster (Fruit fly) protein is Probable phosphorylase b kinase regulatory subunit beta.